Here is a 233-residue protein sequence, read N- to C-terminus: Orotidine 5'-phosphate decarboxylase (233 aa).

Residues D13, K35, 62-71, T122, R182, Q191, G211, and R212 contribute to the substrate site; that span reads DLKFHDIPNT. Catalysis depends on K64, which acts as the Proton donor.

Belongs to the OMP decarboxylase family. Type 1 subfamily. In terms of assembly, homodimer.

It catalyses the reaction orotidine 5'-phosphate + H(+) = UMP + CO2. The protein operates within pyrimidine metabolism; UMP biosynthesis via de novo pathway; UMP from orotate: step 2/2. Functionally, catalyzes the decarboxylation of orotidine 5'-monophosphate (OMP) to uridine 5'-monophosphate (UMP). This Pseudomonas putida (strain W619) protein is Orotidine 5'-phosphate decarboxylase.